Here is a 248-residue protein sequence, read N- to C-terminus: UDP-2,3-diacylglucosamine hydrolase (248 aa).

Residues aspartate 7, histidine 9, aspartate 40, asparagine 78, and histidine 113 each contribute to the Mn(2+) site. Position 78-79 (78-79 (NR)) interacts with substrate. Substrate-binding residues include aspartate 121, serine 159, threonine 163, lysine 166, and histidine 194. Histidine 194 and histidine 196 together coordinate Mn(2+).

It belongs to the LpxH family. Requires Mn(2+) as cofactor.

It localises to the cell inner membrane. It catalyses the reaction UDP-2-N,3-O-bis[(3R)-3-hydroxytetradecanoyl]-alpha-D-glucosamine + H2O = 2-N,3-O-bis[(3R)-3-hydroxytetradecanoyl]-alpha-D-glucosaminyl 1-phosphate + UMP + 2 H(+). It functions in the pathway glycolipid biosynthesis; lipid IV(A) biosynthesis; lipid IV(A) from (3R)-3-hydroxytetradecanoyl-[acyl-carrier-protein] and UDP-N-acetyl-alpha-D-glucosamine: step 4/6. Functionally, hydrolyzes the pyrophosphate bond of UDP-2,3-diacylglucosamine to yield 2,3-diacylglucosamine 1-phosphate (lipid X) and UMP by catalyzing the attack of water at the alpha-P atom. Involved in the biosynthesis of lipid A, a phosphorylated glycolipid that anchors the lipopolysaccharide to the outer membrane of the cell. The sequence is that of UDP-2,3-diacylglucosamine hydrolase from Pseudomonas syringae pv. tomato (strain ATCC BAA-871 / DC3000).